An 892-amino-acid polypeptide reads, in one-letter code: DNA ligase (892 aa).

The tract at residues 1–23 (MTMTNRDDSEQLAWDFDAPESDG) is disordered. NAD(+)-binding positions include 99-103 (DAAYD), 148-149 (SL), and Glu-182. Lys-184 serves as the catalytic N6-AMP-lysine intermediate. NAD(+)-binding residues include Arg-205, Glu-244, Lys-369, and Lys-393. The Zn(2+) site is built by Cys-490, Cys-493, Cys-509, and Cys-515. Positions 810 to 892 (GLPQTLAGKT…KQLLDTGTVE (83 aa)) constitute a BRCT domain.

It belongs to the NAD-dependent DNA ligase family. LigA subfamily. The cofactor is Mg(2+). Mn(2+) serves as cofactor.

The enzyme catalyses NAD(+) + (deoxyribonucleotide)n-3'-hydroxyl + 5'-phospho-(deoxyribonucleotide)m = (deoxyribonucleotide)n+m + AMP + beta-nicotinamide D-nucleotide.. In terms of biological role, DNA ligase that catalyzes the formation of phosphodiester linkages between 5'-phosphoryl and 3'-hydroxyl groups in double-stranded DNA using NAD as a coenzyme and as the energy source for the reaction. It is essential for DNA replication and repair of damaged DNA. The polypeptide is DNA ligase (Bifidobacterium adolescentis (strain ATCC 15703 / DSM 20083 / NCTC 11814 / E194a)).